A 555-amino-acid chain; its full sequence is Glutamine--tRNA ligase (555 aa).

The 'HIGH' region motif lies at proline 34 to histidine 44. ATP-binding positions include glutamate 35 to asparagine 37 and histidine 41 to serine 47. L-glutamine contacts are provided by aspartate 67 and tyrosine 212. ATP is bound by residues threonine 231, arginine 261 to leucine 262, and methionine 269 to lysine 271. The 'KMSKS' region signature appears at isoleucine 268–arginine 272.

Belongs to the class-I aminoacyl-tRNA synthetase family. In terms of assembly, monomer.

The protein resides in the cytoplasm. The enzyme catalyses tRNA(Gln) + L-glutamine + ATP = L-glutaminyl-tRNA(Gln) + AMP + diphosphate. This is Glutamine--tRNA ligase from Yersinia pseudotuberculosis serotype O:3 (strain YPIII).